An 829-amino-acid chain; its full sequence is Periplasmic nitrate reductase (829 aa).

The segment at residues 1–29 is a signal peptide (tat-type signal); the sequence is MKMTRRAFVKANAAASAAAVAGVTLPASA. The 4Fe-4S Mo/W bis-MGD-type domain occupies 41–97; sequence IKWDKAPCRFCGTGCSVLVGTQNGRVVATQGDPEAPVNKGLNCIKGYFLSKIMYGKD. [4Fe-4S] cluster contacts are provided by cysteine 48, cysteine 51, cysteine 55, and cysteine 83. Mo-bis(molybdopterin guanine dinucleotide) is bound by residues lysine 85, glutamine 152, asparagine 177, cysteine 181, 214 to 221, 245 to 249, 264 to 266, methionine 374, glutamine 378, asparagine 484, 510 to 511, lysine 533, aspartate 560, and 718 to 727; these read WGSNMAEM, STYYH, QSD, SD, and TGRVLEHWHT. Residue phenylalanine 794 coordinates substrate. Mo-bis(molybdopterin guanine dinucleotide) is bound by residues asparagine 802 and lysine 819.

Belongs to the prokaryotic molybdopterin-containing oxidoreductase family. NasA/NapA/NarB subfamily. As to quaternary structure, component of the periplasmic nitrate reductase NapAB complex composed of NapA and NapB. [4Fe-4S] cluster serves as cofactor. Mo-bis(molybdopterin guanine dinucleotide) is required as a cofactor. Predicted to be exported by the Tat system. The position of the signal peptide cleavage has not been experimentally proven.

Its subcellular location is the periplasm. The catalysed reaction is 2 Fe(II)-[cytochrome] + nitrate + 2 H(+) = 2 Fe(III)-[cytochrome] + nitrite + H2O. Its function is as follows. Catalytic subunit of the periplasmic nitrate reductase complex NapAB. Receives electrons from NapB and catalyzes the reduction of nitrate to nitrite. The sequence is that of Periplasmic nitrate reductase from Aliivibrio fischeri (strain ATCC 700601 / ES114) (Vibrio fischeri).